The sequence spans 340 residues: Ketol-acid reductoisomerase (NADP(+)) (340 aa).

In terms of domain architecture, KARI N-terminal Rossmann spans 3–182 (VQMEYEKDVK…GAARVGLLET (180 aa)). NADP(+)-binding positions include 26-29 (YGSQ), Arg49, Ser53, and 83-86 (DEIQ). Residue His108 is part of the active site. Position 134 (Gly134) interacts with NADP(+). Residues 183–328 (TYKEETEEDL…AELRKAMPFV (146 aa)) form the KARI C-terminal knotted domain. Residues Asp191, Glu195, Glu227, and Glu231 each coordinate Mg(2+). Residue Ser252 coordinates substrate.

This sequence belongs to the ketol-acid reductoisomerase family. It depends on Mg(2+) as a cofactor.

It catalyses the reaction (2R)-2,3-dihydroxy-3-methylbutanoate + NADP(+) = (2S)-2-acetolactate + NADPH + H(+). It carries out the reaction (2R,3R)-2,3-dihydroxy-3-methylpentanoate + NADP(+) = (S)-2-ethyl-2-hydroxy-3-oxobutanoate + NADPH + H(+). The protein operates within amino-acid biosynthesis; L-isoleucine biosynthesis; L-isoleucine from 2-oxobutanoate: step 2/4. It participates in amino-acid biosynthesis; L-valine biosynthesis; L-valine from pyruvate: step 2/4. Involved in the biosynthesis of branched-chain amino acids (BCAA). Catalyzes an alkyl-migration followed by a ketol-acid reduction of (S)-2-acetolactate (S2AL) to yield (R)-2,3-dihydroxy-isovalerate. In the isomerase reaction, S2AL is rearranged via a Mg-dependent methyl migration to produce 3-hydroxy-3-methyl-2-ketobutyrate (HMKB). In the reductase reaction, this 2-ketoacid undergoes a metal-dependent reduction by NADPH to yield (R)-2,3-dihydroxy-isovalerate. This is Ketol-acid reductoisomerase (NADP(+)) from Streptococcus pneumoniae (strain JJA).